The sequence spans 449 residues: Phosphoglucosamine mutase (449 aa).

Serine 100 acts as the Phosphoserine intermediate in catalysis. The Mg(2+) site is built by serine 100, aspartate 241, aspartate 243, and aspartate 245. Position 100 is a phosphoserine (serine 100).

The protein belongs to the phosphohexose mutase family. Mg(2+) is required as a cofactor. In terms of processing, activated by phosphorylation.

It catalyses the reaction alpha-D-glucosamine 1-phosphate = D-glucosamine 6-phosphate. Its function is as follows. Catalyzes the conversion of glucosamine-6-phosphate to glucosamine-1-phosphate. The protein is Phosphoglucosamine mutase of Clostridium botulinum (strain Langeland / NCTC 10281 / Type F).